The primary structure comprises 702 residues: p-hydroxybenzoic acid--AMP ligase FadD22 (702 aa).

The region spanning 538–616 (ERHRLVLDAV…GLAQYLEAEL (79 aa)) is the Carrier domain. S576 bears the O-(pantetheine 4'-phosphoryl)serine mark.

This sequence belongs to the ATP-dependent AMP-binding enzyme family.

It catalyses the reaction holo-[4-hydroxyphenylalkanoate synthase] + 4-hydroxybenzoate + ATP = 4-hydroxyphenyl-[4-hydroxyphenylalkanoate synthase] + AMP + diphosphate. The protein operates within lipid metabolism; fatty acid biosynthesis. Catalyzes the adenylation of p-hydroxybenzoic acid (pHBA) to form p-hydroxybenzoic acid-AMP (pHBA-AMP), which is converted directly to p-hydroxybenzoyl-S-FadD22 (pHBA-S-FAdD22) thioester intermediate in a CoA-independent manner by attack of the phosphopantetheine thiol of FadD22. This intermediate primes the biosynthesis of the phenolphthiocerol (PPOL) by presenting the pHBA starter unit for elongation by Pks15/1. PPOL is an important intermediate in the biosynthesis of phenolic glycolipid (mycosid B). This chain is p-hydroxybenzoic acid--AMP ligase FadD22 (fadD22), found in Mycobacterium marinum (strain ATCC BAA-535 / M).